A 368-amino-acid polypeptide reads, in one-letter code: MSIMNSDSVENTHNFAPLKNDRLLKALRFEPIDTTPVWMMRQAGRYLPEYKATRAEAGDFMSLCKDTARATEVTMQPLRRYELDAAILFSDILTIPDAMGLGLYFETGEGPKFKRTLRTEADFNQLEAFNAADSLSYVMDAVTSIRKELNGKVPLFGFSGSAWTLATYMIEGGSSKDYRYTKGLLYSKPEFLHQILDHITTAIIDYLDAQIVAGAQIVQLFDSWGGALAHRQFAEFSHKYNKRVVAELKQRHPEVPVVVFTKGGGLWLDVQMDSEADCLGLDWSMPLDKARAILATGKRKIAVQGNLDPATLYGSPELIRQSVNAMLDDAYAGGEKTGYIANLGHGITQWVDPKNAGVFVDAVHEYKL.

Substrate-binding positions include 41–45 (RQAGR), Asp-91, Tyr-168, Ser-223, and His-345.

The protein belongs to the uroporphyrinogen decarboxylase family. In terms of assembly, homodimer.

The protein localises to the cytoplasm. It catalyses the reaction uroporphyrinogen III + 4 H(+) = coproporphyrinogen III + 4 CO2. It participates in porphyrin-containing compound metabolism; protoporphyrin-IX biosynthesis; coproporphyrinogen-III from 5-aminolevulinate: step 4/4. Catalyzes the decarboxylation of four acetate groups of uroporphyrinogen-III to yield coproporphyrinogen-III. The protein is Uroporphyrinogen decarboxylase of Psychrobacter sp. (strain PRwf-1).